Reading from the N-terminus, the 240-residue chain is Uridylate kinase (240 aa).

14 to 17 serves as a coordination point for ATP; it reads KLSG. A UMP-binding site is contributed by glycine 56. Residues glycine 57 and arginine 61 each contribute to the ATP site. UMP is bound by residues aspartate 76 and 137–144; that span reads TGNPFFTT. Residues threonine 164, tyrosine 170, and aspartate 173 each coordinate ATP.

This sequence belongs to the UMP kinase family. In terms of assembly, homohexamer.

Its subcellular location is the cytoplasm. It catalyses the reaction UMP + ATP = UDP + ADP. The protein operates within pyrimidine metabolism; CTP biosynthesis via de novo pathway; UDP from UMP (UMPK route): step 1/1. Inhibited by UTP. In terms of biological role, catalyzes the reversible phosphorylation of UMP to UDP. The protein is Uridylate kinase of Albidiferax ferrireducens (strain ATCC BAA-621 / DSM 15236 / T118) (Rhodoferax ferrireducens).